We begin with the raw amino-acid sequence, 331 residues long: Ornithine lipid hydroxylase OlsE (331 aa).

Transmembrane regions (helical) follow at residues 13–33 (VSSL…YFAF), 37–57 (MHLL…ALFE), 85–105 (GGVQ…ATVA), 120–140 (WPMA…LYMA), and 189–209 (LLGA…FIGL). Residues 126-260 (VVLGLVIAEF…LVIWDQLLGT (135 aa)) enclose the Fatty acid hydroxylase domain.

It belongs to the sterol desaturase family.

The protein localises to the cell inner membrane. The protein operates within lipid metabolism. Its function is as follows. Involved in the biosynthesis of ornithine lipids (OLs), which are phosphorus-free membrane lipids. Is responsible for the hydroxylation of OL within the ornithine moiety. This chain is Ornithine lipid hydroxylase OlsE, found in Rhizobium tropici.